The primary structure comprises 95 residues: Small ribosomal subunit protein bS6 (95 aa).

It belongs to the bacterial ribosomal protein bS6 family.

Its function is as follows. Binds together with bS18 to 16S ribosomal RNA. This is Small ribosomal subunit protein bS6 from Exiguobacterium sp. (strain ATCC BAA-1283 / AT1b).